Reading from the N-terminus, the 167-residue chain is Dihydrofolate reductase (167 aa).

A DHFR domain is found at 1-162; the sequence is MFISMWAQDK…YPHRFQKWQK (162 aa). NADP(+) contacts are provided by residues Ala-7 and 13-19; that span reads LIGKDGL. Asp-27 provides a ligand contact to substrate. 45-46 contributes to the NADP(+) binding site; it reads KT. Arg-58 contributes to the substrate binding site. Residues 64-65 and 99-106 each bind NADP(+); these read TT and GGSRIFQA. Thr-117 lines the substrate pocket.

This sequence belongs to the dihydrofolate reductase family.

It carries out the reaction (6S)-5,6,7,8-tetrahydrofolate + NADP(+) = 7,8-dihydrofolate + NADPH + H(+). It participates in cofactor biosynthesis; tetrahydrofolate biosynthesis; 5,6,7,8-tetrahydrofolate from 7,8-dihydrofolate: step 1/1. Functionally, key enzyme in folate metabolism. Catalyzes an essential reaction for de novo glycine and purine synthesis, and for DNA precursor synthesis. This chain is Dihydrofolate reductase (folA), found in Enterococcus faecium (Streptococcus faecium).